A 156-amino-acid polypeptide reads, in one-letter code: Pheromone-binding protein Gp-9 (156 aa).

Positions 1–19 are cleaved as a signal peptide; that stretch reads MKTFVFHIFIFALVAFASA. 3 cysteine pairs are disulfide-bonded: Cys-37/Cys-77, Cys-73/Cys-129, and Cys-118/Cys-138.

Belongs to the PBP/GOBP family. In terms of assembly, homodimer.

The protein localises to the secreted. Colony queen number, a major feature of social organization, is associated with worker genotype for Gp-9. Colonies are headed by either a single reproductive queen (monogyne form) or multiple queens (polygyne form). Differences in worker Gp-9 genotypes between social forms may cause differences in workers' abilities to recognize queens and regulate their numbers. This Solenopsis globularia littoralis (Fire ant) protein is Pheromone-binding protein Gp-9.